Consider the following 328-residue polypeptide: Stress response kinase A (328 aa).

The active-site Proton acceptor is D201. Residues N206 and D217 each contribute to the Mg(2+) site. Residue D217 is part of the active site.

Belongs to the SrkA/RdoA protein kinase family. As to quaternary structure, monomer. It depends on Mg(2+) as a cofactor.

The protein localises to the cytoplasm. The catalysed reaction is L-seryl-[protein] + ATP = O-phospho-L-seryl-[protein] + ADP + H(+). It carries out the reaction L-threonyl-[protein] + ATP = O-phospho-L-threonyl-[protein] + ADP + H(+). Its function is as follows. A protein kinase that phosphorylates Ser and Thr residues. Probably acts to suppress the effects of stress linked to accumulation of reactive oxygen species. Probably involved in the extracytoplasmic stress response. This Salmonella paratyphi A (strain ATCC 9150 / SARB42) protein is Stress response kinase A.